The following is a 124-amino-acid chain: uncharacterized protein (124 aa).

It belongs to the YciI family.

This is an uncharacterized protein from Rhizobium meliloti (strain 1021) (Ensifer meliloti).